The sequence spans 447 residues: UPF0210 protein OEOE_0945 (447 aa).

The protein belongs to the UPF0210 family. In terms of assembly, homodimer.

This is UPF0210 protein OEOE_0945 from Oenococcus oeni (strain ATCC BAA-331 / PSU-1).